The chain runs to 763 residues: 5-methyltetrahydropteroyltriglutamate--homocysteine methyltransferase (763 aa).

Residues 16 to 19 (RELK) and lysine 114 contribute to the 5-methyltetrahydropteroyltri-L-glutamate site. L-homocysteine contacts are provided by residues 438 to 440 (IGS) and glutamate 491. L-methionine is bound by residues 438 to 440 (IGS) and glutamate 491. 5-methyltetrahydropteroyltri-L-glutamate contacts are provided by residues 522-523 (RC) and tryptophan 568. An L-homocysteine-binding site is contributed by aspartate 606. Aspartate 606 contributes to the L-methionine binding site. Glutamate 612 provides a ligand contact to 5-methyltetrahydropteroyltri-L-glutamate. Residues histidine 648, cysteine 650, and glutamate 672 each contribute to the Zn(2+) site. Histidine 701 functions as the Proton donor in the catalytic mechanism. Cysteine 733 contacts Zn(2+).

This sequence belongs to the vitamin-B12 independent methionine synthase family. Zn(2+) serves as cofactor.

It catalyses the reaction 5-methyltetrahydropteroyltri-L-glutamate + L-homocysteine = tetrahydropteroyltri-L-glutamate + L-methionine. It participates in amino-acid biosynthesis; L-methionine biosynthesis via de novo pathway; L-methionine from L-homocysteine (MetE route): step 1/1. Functionally, catalyzes the transfer of a methyl group from 5-methyltetrahydrofolate to homocysteine resulting in methionine formation. The protein is 5-methyltetrahydropteroyltriglutamate--homocysteine methyltransferase of Parvibaculum lavamentivorans (strain DS-1 / DSM 13023 / NCIMB 13966).